The chain runs to 534 residues: CTP synthase (534 aa).

The interval 1–265 (MKYIIVTGGV…TTQLMKHLQL (265 aa)) is amidoligase domain. Residue Ser12 coordinates CTP. Residue Ser12 participates in UTP binding. Residue 13–18 (GLGKGI) participates in ATP binding. An L-glutamine-binding site is contributed by Tyr53. Position 70 (Asp70) interacts with ATP. Positions 70 and 140 each coordinate Mg(2+). CTP is bound by residues 147-149 (DIE), 186-191 (KTKPSQ), and Lys222. UTP-binding positions include 186–191 (KTKPSQ) and Lys222. The 242-residue stretch at 289–530 (KLAIVGKYTN…VAAMCKYRKE (242 aa)) folds into the Glutamine amidotransferase type-1 domain. L-glutamine is bound at residue Gly352. Cys379 (nucleophile; for glutamine hydrolysis) is an active-site residue. Residues 380–383 (LGMQ), Glu403, and Arg460 contribute to the L-glutamine site. Residues His503 and Glu505 contribute to the active site.

The protein belongs to the CTP synthase family. Homotetramer.

It carries out the reaction UTP + L-glutamine + ATP + H2O = CTP + L-glutamate + ADP + phosphate + 2 H(+). The enzyme catalyses L-glutamine + H2O = L-glutamate + NH4(+). The catalysed reaction is UTP + NH4(+) + ATP = CTP + ADP + phosphate + 2 H(+). It functions in the pathway pyrimidine metabolism; CTP biosynthesis via de novo pathway; CTP from UDP: step 2/2. Allosterically activated by GTP, when glutamine is the substrate; GTP has no effect on the reaction when ammonia is the substrate. The allosteric effector GTP functions by stabilizing the protein conformation that binds the tetrahedral intermediate(s) formed during glutamine hydrolysis. Inhibited by the product CTP, via allosteric rather than competitive inhibition. Functionally, catalyzes the ATP-dependent amination of UTP to CTP with either L-glutamine or ammonia as the source of nitrogen. Regulates intracellular CTP levels through interactions with the four ribonucleotide triphosphates. This is CTP synthase from Methanosarcina barkeri (strain Fusaro / DSM 804).